The chain runs to 325 residues: BES1/BZR1 homolog protein 4 (325 aa).

The segment at 1-21 is disordered; that stretch reads MTSGTRMPTWRERENNKRRER. Residues 6 to 89 form a required for DNA-binding region; it reads RMPTWREREN…RMEIGGGSAT (84 aa). T169 is subject to Phosphothreonine. The disordered stretch occupies residues 304–325; sequence ERIHEESGSDDLELTLGNSSTR.

This sequence belongs to the BZR/LAT61 family. Post-translationally, phosphorylated. Phosphorylation increases protein degradation.

The protein is BES1/BZR1 homolog protein 4 (BEH4) of Arabidopsis thaliana (Mouse-ear cress).